The primary structure comprises 613 residues: DNA polymerase II small subunit (613 aa).

This sequence belongs to the DNA polymerase delta/II small subunit family. As to quaternary structure, heterodimer of a large subunit and a small subunit.

It carries out the reaction DNA(n) + a 2'-deoxyribonucleoside 5'-triphosphate = DNA(n+1) + diphosphate. The catalysed reaction is Exonucleolytic cleavage in the 3'- to 5'-direction to yield nucleoside 5'-phosphates.. In terms of biological role, possesses two activities: a DNA synthesis (polymerase) and an exonucleolytic activity that degrades single-stranded DNA in the 3' to 5' direction. Has a template-primer preference which is characteristic of a replicative DNA polymerase. The protein is DNA polymerase II small subunit (polB) of Pyrococcus furiosus (strain ATCC 43587 / DSM 3638 / JCM 8422 / Vc1).